The following is a 65-amino-acid chain: Keratin-associated protein 20-2 (65 aa).

The protein belongs to the KRTAP type 20 family. In terms of assembly, interacts with hair keratins.

In the hair cortex, hair keratin intermediate filaments are embedded in an interfilamentous matrix, consisting of hair keratin-associated proteins (KRTAP), which are essential for the formation of a rigid and resistant hair shaft through their extensive disulfide bond cross-linking with abundant cysteine residues of hair keratins. The matrix proteins include the high-sulfur and high-glycine-tyrosine keratins. This is Keratin-associated protein 20-2 (KRTAP20-2) from Homo sapiens (Human).